A 536-amino-acid chain; its full sequence is Inactive beta-amylase 9 (536 aa).

Ser-47 is modified (phosphoserine). The segment at Gln-511–Ala-536 is disordered.

Belongs to the glycosyl hydrolase 14 family. Mostly expressed in young floral buds, flowers and roots, and, to a later extent, in stems and leaves.

The protein localises to the cytoplasm. This chain is Inactive beta-amylase 9 (BAM9), found in Arabidopsis thaliana (Mouse-ear cress).